The chain runs to 708 residues: Exocyst complex component 5 (708 aa).

The residue at position 2 (Ala-2) is an N-acetylalanine. Residues 40–101 (KRLLEEFVNH…AFQHFQELDE (62 aa)) adopt a coiled-coil conformation. Residues Thr-122, Thr-395, and Thr-405 each carry the phosphothreonine modification. Position 412 is a phosphoserine (Ser-412).

The protein belongs to the SEC10 family. As to quaternary structure, the exocyst complex is composed of EXOC1, EXOC2, EXOC3, EXOC4, EXOC5, EXOC6, EXOC7 and EXOC8. Interacts with EXOC3L1. Ubiquitous.

Its subcellular location is the cytoplasm. It localises to the midbody. Its function is as follows. Component of the exocyst complex involved in the docking of exocytic vesicles with fusion sites on the plasma membrane. This chain is Exocyst complex component 5 (EXOC5), found in Homo sapiens (Human).